The chain runs to 171 residues: Vimentin-type intermediate filament-associated coiled-coil protein (171 aa).

The stretch at 7 to 98 (LQIREANAHL…QRDQMIQELQ (92 aa)) forms a coiled coil. The disordered stretch occupies residues 126–171 (ELGPLPSSHSHGAQLLPDGPGPPLGNSMREEEGQDDQQPAVFGTTV).

Expressed in brain, heart, kidney, liver, lung, skeletal muscle, spleen and testis. Within the kidney expression is pronounced within glomeruli.

The protein resides in the cytoplasm. The protein is Vimentin-type intermediate filament-associated coiled-coil protein (Vmac) of Rattus norvegicus (Rat).